The sequence spans 308 residues: MTSTDQGSWARSEGDSWDIVSSVGYTALGVSAQRAVESERPDALIDDPFAKHFVLAAGEPHLIETITKRDAPQASPFEYLRGMGMRSRFFDEFFLEAAASGITQAVILAAGLDARAHRLAWPAGVTVYELDQPQVLAFKDGVYAQQGAEPTCDRRTVAVDLRDDWPAALKEAGFDAGRPTAWSAEGLLPYLPAAAQELLFERMVELSAPGSRAAIEGPTGTLGMSQFAKVEQKYRSEKDTFGKIDITELFYDEEKTPPVEWFSVRGWSTQGLDMFDLAERYGVRHPEVPEDIRELAGAMHYLTCTLPA.

S-adenosyl-L-methionine contacts are provided by residues Asp-131 and 160 to 161; that span reads DL.

Belongs to the UPF0677 family.

Exhibits S-adenosyl-L-methionine-dependent methyltransferase activity. The protein is Putative S-adenosyl-L-methionine-dependent methyltransferase MAB_4585c of Mycobacteroides abscessus (strain ATCC 19977 / DSM 44196 / CCUG 20993 / CIP 104536 / JCM 13569 / NCTC 13031 / TMC 1543 / L948) (Mycobacterium abscessus).